The chain runs to 159 residues: MAEVPGAQRPVLAGGPEPRDPLDCWACAVLVTAQNLLVAVFNLLLLALVLGTILLPAVIMLGFGFLCHSQFLRSQAPLCTSHLRDPGFTALLVTGFLLLVPLLVLALATYRRLCLRLRLADCLVPYSRALYRRRRIPQPKQIPVSPGSRSVPTPGKVWV.

The next 2 helical transmembrane spans lie at 43–63 (LLLL…MLGF) and 88–108 (FTAL…LALA).

It belongs to the TMEM88 family. Interacts (via C-terminus) with DVL1.

The protein resides in the cell membrane. In terms of biological role, inhibits the Wnt/beta-catenin signaling pathway. Crucial for heart development and acts downstream of GATA factors in the pre-cardiac mesoderm to specify lineage commitment of cardiomyocyte development. The protein is Transmembrane protein 88 (Tmem88) of Mus musculus (Mouse).